The sequence spans 367 residues: Cobalt-precorrin-5B C(1)-methyltransferase (367 aa).

Belongs to the CbiD family.

It catalyses the reaction Co-precorrin-5B + S-adenosyl-L-methionine = Co-precorrin-6A + S-adenosyl-L-homocysteine. Its pathway is cofactor biosynthesis; adenosylcobalamin biosynthesis; cob(II)yrinate a,c-diamide from sirohydrochlorin (anaerobic route): step 6/10. Its function is as follows. Catalyzes the methylation of C-1 in cobalt-precorrin-5B to form cobalt-precorrin-6A. The sequence is that of Cobalt-precorrin-5B C(1)-methyltransferase from Priestia megaterium (Bacillus megaterium).